We begin with the raw amino-acid sequence, 120 residues long: Ribosome-binding factor A (120 aa).

Belongs to the RbfA family. In terms of assembly, monomer. Binds 30S ribosomal subunits, but not 50S ribosomal subunits or 70S ribosomes.

The protein localises to the cytoplasm. Its function is as follows. One of several proteins that assist in the late maturation steps of the functional core of the 30S ribosomal subunit. Associates with free 30S ribosomal subunits (but not with 30S subunits that are part of 70S ribosomes or polysomes). Required for efficient processing of 16S rRNA. May interact with the 5'-terminal helix region of 16S rRNA. In Buchnera aphidicola subsp. Acyrthosiphon pisum (strain 5A), this protein is Ribosome-binding factor A.